A 223-amino-acid polypeptide reads, in one-letter code: Small ribosomal subunit protein uS11m (223 aa).

A mitochondrion-targeting transit peptide spans 1–38 (MVLKHSVTYNLSFFISFTFSSIFFSSLILFLVYKSVLS).

Belongs to the universal ribosomal protein uS11 family. Component of the mitochondrial small ribosomal subunit (mt-SSU). Mature yeast 74S mitochondrial ribosomes consist of a small (37S) and a large (54S) subunit. The 37S small subunit contains a 15S ribosomal RNA (15S mt-rRNA) and at least 32 different proteins. The 54S large subunit contains a 21S rRNA (21S mt-rRNA) and at least 45 different proteins.

It is found in the mitochondrion. Its function is as follows. Component of the mitochondrial ribosome (mitoribosome), a dedicated translation machinery responsible for the synthesis of mitochondrial genome-encoded proteins, including at least some of the essential transmembrane subunits of the mitochondrial respiratory chain. The mitoribosomes are attached to the mitochondrial inner membrane and translation products are cotranslationally integrated into the membrane. This chain is Small ribosomal subunit protein uS11m (mrps18), found in Schizosaccharomyces pombe (strain 972 / ATCC 24843) (Fission yeast).